We begin with the raw amino-acid sequence, 278 residues long: Large ribosomal subunit protein uL2 (278 aa).

A disordered region spans residues Asn226–Lys278.

This sequence belongs to the universal ribosomal protein uL2 family. As to quaternary structure, part of the 50S ribosomal subunit. Forms a bridge to the 30S subunit in the 70S ribosome.

In terms of biological role, one of the primary rRNA binding proteins. Required for association of the 30S and 50S subunits to form the 70S ribosome, for tRNA binding and peptide bond formation. It has been suggested to have peptidyltransferase activity; this is somewhat controversial. Makes several contacts with the 16S rRNA in the 70S ribosome. The sequence is that of Large ribosomal subunit protein uL2 from Rhodopseudomonas palustris (strain HaA2).